A 2512-amino-acid polypeptide reads, in one-letter code: Probable polyketide synthase 5 (2512 aa).

The Ketosynthase family 3 (KS3) domain maps to 17–447; sequence MKGVAIVGIG…GSNCCLLISE (431 aa). Residues Cys-187, His-329, and His-368 each act as for beta-ketoacyl synthase activity in the active site. The acyl/malonyl transferase stretch occupies residues 638-671; that stretch reads GVNPSFILGHSLGEIPTSYCSGMIDLDTFCYTVY. The active-site For acyl/malonyl transferase activity is Ser-648. Positions 928–1050 are N-terminal hotdog fold; sequence IDHLGLSNSY…ANFQLLDHTI (123 aa). One can recognise a PKS/mFAS DH domain in the interval 928–1210; it reads IDHLGLSNSY…SKSLIPIKEL (283 aa). His-962 acts as the Proton acceptor; for dehydratase activity in catalysis. The segment at 1067–1210 is C-terminal hotdog fold; sequence TLARLTKNEI…SKSLIPIKEL (144 aa). Asp-1125 serves as the catalytic Proton donor; for dehydratase activity. A Carrier domain is found at 2430–2507; sequence AGSKNVDELF…VSIKIILNFL (78 aa). Ser-2467 carries the O-(pantetheine 4'-phosphoryl)serine modification.

The cofactor is pantetheine 4'-phosphate.

Functionally, probable polyketide synthase. This is Probable polyketide synthase 5 (pks5) from Dictyostelium discoideum (Social amoeba).